The sequence spans 460 residues: Protein btn1 (460 aa).

Helical transmembrane passes span 42-62 (VCVA…VILS), 76-96 (VVLL…PYFI), 105-125 (IIIF…SPPY), 135-155 (LAGI…FVGL), 164-184 (LAAW…AYAL), 195-215 (ATLL…FMVL), 287-307 (GLFF…YTIN), 323-343 (FAHF…GVFI), 356-376 (LYLP…QAVF), 378-398 (FIPS…LGGL), and 428-448 (AAGI…LCDW).

It belongs to the battenin family.

It is found in the vacuole membrane. Functionally, involved in vacuolar transport and vacuole pH homeostasis. Also required for cytokinesis. The polypeptide is Protein btn1 (btn1) (Aspergillus fumigatus (strain ATCC MYA-4609 / CBS 101355 / FGSC A1100 / Af293) (Neosartorya fumigata)).